A 367-amino-acid polypeptide reads, in one-letter code: ELAV-like protein 3 (367 aa).

RRM domains lie at 39–117, 125–205, and 284–362; these read TNLI…YARP, ANLY…FANN, and WCIF…FKTS.

It belongs to the RRM elav family. In terms of assembly, interacts with MAP1B light chain LC1. Brain specific. Expressed in the hippocampus with expression in CA1, CA3 and dentate gyrus.

RNA-binding protein that binds to AU-rich element (ARE) sequences of target mRNAs, including VEGF mRNA. May also bind poly-A tracts via RRM 3. May be involved in neuronal differentiation and maintenance. Plays a role in the stabilization of GAP43 mRNA and in spatial learning. The polypeptide is ELAV-like protein 3 (Elavl3) (Mus musculus (Mouse)).